A 775-amino-acid chain; its full sequence is Lon protease (775 aa).

A Lon N-terminal domain is found at 6–207; it reads LPLMALRDIV…TIINILTSNI (202 aa). 356–363 contributes to the ATP binding site; the sequence is GPPGVGKT. The 182-residue stretch at 592-773 folds into the Lon proteolytic domain; it reads NDQIGSTTGL…DQVLEHALTK (182 aa). Residues Ser679 and Lys722 contribute to the active site.

The protein belongs to the peptidase S16 family. In terms of assembly, homohexamer. Organized in a ring with a central cavity.

It localises to the cytoplasm. The enzyme catalyses Hydrolysis of proteins in presence of ATP.. Its function is as follows. ATP-dependent serine protease that mediates the selective degradation of mutant and abnormal proteins as well as certain short-lived regulatory proteins. Required for cellular homeostasis and for survival from DNA damage and developmental changes induced by stress. Degrades polypeptides processively to yield small peptide fragments that are 5 to 10 amino acids long. Binds to DNA in a double-stranded, site-specific manner. The polypeptide is Lon protease (Rickettsia bellii (strain RML369-C)).